The sequence spans 292 residues: Phosphatidylserine decarboxylase proenzyme (292 aa).

Active-site charge relay system; for autoendoproteolytic cleavage activity residues include Asp98, His153, and Ser254. Ser254 acts as the Schiff-base intermediate with substrate; via pyruvic acid; for decarboxylase activity in catalysis. Ser254 is modified (pyruvic acid (Ser); by autocatalysis).

This sequence belongs to the phosphatidylserine decarboxylase family. PSD-B subfamily. Prokaryotic type I sub-subfamily. As to quaternary structure, heterodimer of a large membrane-associated beta subunit and a small pyruvoyl-containing alpha subunit. Pyruvate serves as cofactor. Post-translationally, is synthesized initially as an inactive proenzyme. Formation of the active enzyme involves a self-maturation process in which the active site pyruvoyl group is generated from an internal serine residue via an autocatalytic post-translational modification. Two non-identical subunits are generated from the proenzyme in this reaction, and the pyruvate is formed at the N-terminus of the alpha chain, which is derived from the carboxyl end of the proenzyme. The autoendoproteolytic cleavage occurs by a canonical serine protease mechanism, in which the side chain hydroxyl group of the serine supplies its oxygen atom to form the C-terminus of the beta chain, while the remainder of the serine residue undergoes an oxidative deamination to produce ammonia and the pyruvoyl prosthetic group on the alpha chain. During this reaction, the Ser that is part of the protease active site of the proenzyme becomes the pyruvoyl prosthetic group, which constitutes an essential element of the active site of the mature decarboxylase.

It localises to the cell membrane. It catalyses the reaction a 1,2-diacyl-sn-glycero-3-phospho-L-serine + H(+) = a 1,2-diacyl-sn-glycero-3-phosphoethanolamine + CO2. It participates in phospholipid metabolism; phosphatidylethanolamine biosynthesis; phosphatidylethanolamine from CDP-diacylglycerol: step 2/2. Functionally, catalyzes the formation of phosphatidylethanolamine (PtdEtn) from phosphatidylserine (PtdSer). This Halorhodospira halophila (strain DSM 244 / SL1) (Ectothiorhodospira halophila (strain DSM 244 / SL1)) protein is Phosphatidylserine decarboxylase proenzyme.